The chain runs to 356 residues: Ubiquitin-conjugating enzyme E2 variant 3 (356 aa).

The disordered stretch occupies residues 1–83; sequence MSDQPGTSRP…LEDLHNYHRE (83 aa). Residues 18 to 32 are compositionally biased toward polar residues; that stretch reads PTKTATRRRARPIAI. A compositionally biased stretch (basic and acidic residues) spans 63–76; the sequence is QPRKTVPKNVPLED. The region spanning 169-324 is the UBC core domain; sequence DIITEFMNRS…AREFVMKMAG (156 aa).

The protein belongs to the ubiquitin-conjugating enzyme family. In terms of assembly, may interact with pmk-3. In terms of tissue distribution, expressed ubiquitously.

Its subcellular location is the nucleus. It is found in the cytoplasm. It localises to the cell projection. The protein localises to the dendrite. The protein resides in the axon. Its subcellular location is the cilium. Functionally, possible negative regulator of polyubiquitination. May modulate the activity of the p38 MAP kinase pnk-3. May have a role in axon termination and synaptic transmission at motor and mechanosensory neurons. Plays a role in intraflagellar transport in cilia and cilium length regulation. This chain is Ubiquitin-conjugating enzyme E2 variant 3, found in Caenorhabditis elegans.